The sequence spans 495 residues: Cobyric acid synthase (495 aa).

The region spanning 249-442 is the GATase cobBQ-type domain; that stretch reads KFIVKVPVVT…LHGVFDEPEA (194 aa). The active-site Nucleophile is the C330. The active site involves H434.

Belongs to the CobB/CobQ family. CobQ subfamily.

The protein operates within cofactor biosynthesis; adenosylcobalamin biosynthesis. Catalyzes amidations at positions B, D, E, and G on adenosylcobyrinic A,C-diamide. NH(2) groups are provided by glutamine, and one molecule of ATP is hydrogenolyzed for each amidation. The chain is Cobyric acid synthase from Aliivibrio fischeri (strain ATCC 700601 / ES114) (Vibrio fischeri).